We begin with the raw amino-acid sequence, 1068 residues long: Carbamoyl phosphate synthase large chain (1068 aa).

The interval 1 to 403 (MPKRTDINTI…SLQKALRGLE (403 aa)) is carboxyphosphate synthetic domain. 12 residues coordinate ATP: Arg-129, Arg-169, Gly-175, Gly-176, Gln-208, Val-210, Glu-215, Gly-241, Val-242, His-243, Gln-285, and Glu-299. In terms of domain architecture, ATP-grasp 1 spans 133–328 (KEAMEKIGLS…IAKVAAKLAV (196 aa)). Mg(2+) contacts are provided by Gln-285, Glu-299, and Asn-301. Residues Gln-285, Glu-299, and Asn-301 each contribute to the Mn(2+) site. The tract at residues 404–548 (TGICGFNLMS…YSTYEEECES (145 aa)) is oligomerization domain. The segment at 549 to 930 (RPSDKKKIMI…AFLKAQLGAN (382 aa)) is carbamoyl phosphate synthetic domain. The region spanning 673–864 (QQILHKLHLK…LAKIAARVMA (192 aa)) is the ATP-grasp 2 domain. ATP contacts are provided by Arg-709, His-748, Leu-750, Glu-755, Gly-780, Ile-781, His-782, Ser-783, Gln-823, and Glu-835. Mg(2+) contacts are provided by Gln-823, Glu-835, and Asn-837. Residues Gln-823, Glu-835, and Asn-837 each coordinate Mn(2+). The region spanning 931-1068 (ERIPKTGKVF…SLQDLHQRLL (138 aa)) is the MGS-like domain. Positions 931-1068 (ERIPKTGKVF…SLQDLHQRLL (138 aa)) are allosteric domain.

It belongs to the CarB family. In terms of assembly, composed of two chains; the small (or glutamine) chain promotes the hydrolysis of glutamine to ammonia, which is used by the large (or ammonia) chain to synthesize carbamoyl phosphate. Tetramer of heterodimers (alpha,beta)4. The cofactor is Mg(2+). It depends on Mn(2+) as a cofactor.

The catalysed reaction is hydrogencarbonate + L-glutamine + 2 ATP + H2O = carbamoyl phosphate + L-glutamate + 2 ADP + phosphate + 2 H(+). It carries out the reaction hydrogencarbonate + NH4(+) + 2 ATP = carbamoyl phosphate + 2 ADP + phosphate + 2 H(+). It participates in amino-acid biosynthesis; L-arginine biosynthesis; carbamoyl phosphate from bicarbonate: step 1/1. It functions in the pathway pyrimidine metabolism; UMP biosynthesis via de novo pathway; (S)-dihydroorotate from bicarbonate: step 1/3. Large subunit of the glutamine-dependent carbamoyl phosphate synthetase (CPSase). CPSase catalyzes the formation of carbamoyl phosphate from the ammonia moiety of glutamine, carbonate, and phosphate donated by ATP, constituting the first step of 2 biosynthetic pathways, one leading to arginine and/or urea and the other to pyrimidine nucleotides. The large subunit (synthetase) binds the substrates ammonia (free or transferred from glutamine from the small subunit), hydrogencarbonate and ATP and carries out an ATP-coupled ligase reaction, activating hydrogencarbonate by forming carboxy phosphate which reacts with ammonia to form carbamoyl phosphate. This is Carbamoyl phosphate synthase large chain from Pasteurella multocida (strain Pm70).